The chain runs to 224 residues: Cytochrome c biogenesis ATP-binding export protein CcmA (224 aa).

In terms of domain architecture, ABC transporter spans 1 to 220; it reads MQNAEAAPAL…EYAHAEVVGA (220 aa). An ATP-binding site is contributed by 40–47; the sequence is GANGSGKT.

Belongs to the ABC transporter superfamily. CcmA exporter (TC 3.A.1.107) family. The complex is composed of two ATP-binding proteins (CcmA) and two transmembrane proteins (CcmB).

The protein resides in the cell inner membrane. It catalyses the reaction heme b(in) + ATP + H2O = heme b(out) + ADP + phosphate + H(+). Its function is as follows. Part of the ABC transporter complex CcmAB involved in the biogenesis of c-type cytochromes; once thought to export heme, this seems not to be the case, but its exact role is uncertain. Responsible for energy coupling to the transport system. The polypeptide is Cytochrome c biogenesis ATP-binding export protein CcmA (Bordetella parapertussis (strain 12822 / ATCC BAA-587 / NCTC 13253)).